A 1129-amino-acid polypeptide reads, in one-letter code: Serine/threonine-protein kinase 11-interacting protein (1129 aa).

LRR repeat units follow at residues 107–128 (SLRSLELRCLPPHCLRGLRSVY), 130–150 (QLEVLTCYRCVSSLEEVIALC), 162–183 (VLHTLDFSYNTLKNLDGSLELL), 185–206 (SLKILDLSHNQITECGSYLKVL), 208–229 (ELQYLNLGYNHLTAVPELSVGN), 232–253 (KLHSLILKHNQLSGTSGLENLP), 254–275 (NLQHLDLSYNLLLEHSQLSGLA), and 279–300 (NLKQLFLEGNPLYFQKDYRALT). 4 disordered regions span residues 335 to 392 (RLQP…RRGQ), 428 to 475 (DPEY…HVAP), 654 to 678 (GDIYSPESLQQGKEPTAGLHRNHTG), and 696 to 724 (NPTGETSTPLRPLSAEPPQGDDGGGGLAA). Polar residues predominate over residues 337–355 (QPSSSATESSCTGDLTDSY). Positions 365 to 374 (LPRKKSRVKV) are enriched in basic residues. Over residues 381 to 391 (ERSDSEYERRG) the composition is skewed to basic and acidic residues. Residues 436 to 447 (HSPPPRASPSPT) show a composition bias toward pro residues. The span at 448–458 (APSSVPKQKSP) shows a compositional bias: low complexity.

The protein belongs to the STK11IP family.

The protein resides in the cytoplasm. This Xenopus tropicalis (Western clawed frog) protein is Serine/threonine-protein kinase 11-interacting protein (stk11ip).